Reading from the N-terminus, the 293-residue chain is EID1-like F-box protein 1 (293 aa).

The F-box domain occupies 16–68 (QCTKGHLNEDVLLLVFQHLNWNPKLVATLSCVCRWFDDFAKRVLWKEFCKTRA). Residues 245 to 293 (AIPSEDNNHTEKKQDNGFPRENVLKRRNSLLGGSENGPPPQKRLTNPNQ) form a disordered region. Residues 250-259 (DNNHTEKKQD) show a composition bias toward basic and acidic residues.

The polypeptide is EID1-like F-box protein 1 (EDL1) (Arabidopsis thaliana (Mouse-ear cress)).